The sequence spans 427 residues: MGAGATGRAMDGPRLLLLLLLGVSLGGAKEACPTGLYTHSGECCKACNLGEGVAQPCGANQTVCEPCLDSVTFSDVVSATEPCKPCTECVGLQSMSAPCVEADDAVCRCAYGYYQDETTGRCEACRVCEAGSGLVFSCQDKQNTVCEECPDGTYSDEANHVDPCLPCTVCEDTERQLRECTRWADAECEEIPGRWITRSTPPEGSDSTAPSTQEPEAPPEQDLIASTVAGVVTTVMGSSQPVVTRGTTDNLIPVYCSILAAVVVGLVAYIAFKRWNSCKQNKQGANSRPVNQTPPPEGEKLHSDSGISVDSQSLHDQQPHTQTASGQALKGDGGLYSSLPPAKREEVEKLLNGSAGDTWRHLAGELGYQPEHIDSFTHEACPVRALLASWATQDSATLDALLAALRRIQRADLVESLCSESTATSPV.

Positions 1–28 are cleaved as a signal peptide; that stretch reads MGAGATGRAMDGPRLLLLLLLGVSLGGA. Residues 29–250 are Extracellular-facing; that stretch reads KEACPTGLYT…PVVTRGTTDN (222 aa). TNFR-Cys repeat units follow at residues 31–64, 66–107, 108–146, and 148–188; these read ACPT…QTVC, PCLD…DAVC, RCAY…NTVC, and ECPD…DAEC. Intrachain disulfides connect cysteine 32–cysteine 43, cysteine 44–cysteine 57, cysteine 47–cysteine 64, cysteine 67–cysteine 83, cysteine 86–cysteine 99, cysteine 89–cysteine 107, cysteine 109–cysteine 122, cysteine 125–cysteine 138, cysteine 128–cysteine 146, cysteine 149–cysteine 164, cysteine 167–cysteine 180, and cysteine 170–cysteine 188. Asparagine 60 is a glycosylation site (N-linked (GlcNAc...) asparagine). The interval 194 to 219 is disordered; sequence RWITRSTPPEGSDSTAPSTQEPEAPP. A compositionally biased stretch (polar residues) spans 197 to 214; the sequence is TRSTPPEGSDSTAPSTQE. A helical transmembrane segment spans residues 251 to 272; sequence LIPVYCSILAAVVVGLVAYIAF. Residues 273-427 are Cytoplasmic-facing; it reads KRWNSCKQNK…CSESTATSPV (155 aa). Composition is skewed to polar residues over residues 281–291 and 305–326; these read NKQGANSRPVN and SGIS…TASG. Positions 281-338 are disordered; the sequence is NKQGANSRPVNQTPPPEGEKLHSDSGISVDSQSLHDQQPHTQTASGQALKGDGGLYSS. Residue serine 311 is modified to Phosphoserine. The tract at residues 326 to 341 is mediates interaction with KIDINS220; sequence GQALKGDGGLYSSLPP. A Death domain is found at 344–421; that stretch reads REEVEKLLNG…DLVESLCSES (78 aa).

As to quaternary structure, homodimer; disulfide-linked. Heterodimer with SORCS2. The extracellular domains of the heterodimer bind NGF. The cytoplasmic region of the heterodimer binds TRIO. NGF binding mediates dissociation of TRIO from the receptor complex. Interacts with RTN4R. Interacts with TRAF2, TRAF4, TRAF6, PTPN13 and RANBP9. Interacts through TRAF6 with SQSTM1 which bridges NGFR to NTRK1. Interacts with BEX1. Interacts with BEX3. Interacts with KIDINS220 and NTRK1. Can form a ternary complex with NTRK1 and KIDINS220 and this complex is affected by the expression levels of KIDINS220. An increase in KIDINS220 expression leads to a decreased association of NGFR and NTRK1. Interacts with NTRK2; may regulate the ligand specificity of the NTRK2 receptor. Interacts (via death domain) with RAB31. Interacts with LINGO1. Interacts with NRADD. Interacts with MAGED1; the interaction antagonizes the association NGFR:NTRK1. Interacts (via death domain) with ARHGDIA and RIPK2. Interacts with BFAR. Post-translationally, N- and O-glycosylated. O-linked glycans consist of Gal(1-3)GalNAc core elongated by 1 or 2 NeuNAc. In terms of processing, phosphorylated on serine residues.

It localises to the cell membrane. It is found in the cytoplasm. The protein resides in the perikaryon. Its subcellular location is the cell projection. The protein localises to the growth cone. It localises to the dendritic spine. Low affinity receptor which can bind to NGF, BDNF, NTF3, and NTF4. Forms a heterodimeric receptor with SORCS2 that binds the precursor forms of NGF, BDNF and NTF3 with high affinity, and has much lower affinity for mature NGF and BDNF. Plays an important role in differentiation and survival of specific neuronal populations during development. Can mediate cell survival as well as cell death of neural cells. Plays a role in the inactivation of RHOA. Plays a role in the regulation of the translocation of GLUT4 to the cell surface in adipocytes and skeletal muscle cells in response to insulin, probably by regulating RAB31 activity, and thereby contributes to the regulation of insulin-dependent glucose uptake. Necessary for the circadian oscillation of the clock genes BMAL1, PER1, PER2 and NR1D1 in the suprachiasmatic nucleus (SCmgetaN) of the brain and in liver and of the genes involved in glucose and lipid metabolism in the liver. Together with BFAR negatively regulates NF-kappa-B and JNK-related signaling pathways. In Homo sapiens (Human), this protein is Tumor necrosis factor receptor superfamily member 16 (NGFR).